A 459-amino-acid polypeptide reads, in one-letter code: DNA-binding protein P3A2 (459 aa).

The tract at residues 1 to 25 is disordered; the sequence is MMISEDISEPSSPDTPFDDSDLLNS.

This sequence belongs to the NRF1/Ewg family.

Its subcellular location is the nucleus. In terms of biological role, transcriptional regulator that interacts with specific sites in the control region of the cyIIIa actin gene. Also binds specifically to similar target sites located in the regulatory region of the SM50 gene. In Strongylocentrotus purpuratus (Purple sea urchin), this protein is DNA-binding protein P3A2.